The chain runs to 625 residues: Probable potassium transport system protein Kup 2 (625 aa).

A run of 12 helical transmembrane segments spans residues 10 to 30 (LAAL…TSPL), 47 to 67 (GVHL…VVTL), 104 to 124 (VLLL…VITP), 140 to 160 (PAFK…LFAV), 172 to 192 (FGPV…AEII), 214 to 234 (GWHM…VEAL), 250 to 270 (WLGL…ALLM), 283 to 303 (LFPQ…TVIA), 347 to 367 (WLLL…SALA), 369 to 389 (AYGI…FFVV), 396 to 416 (PLPV…LLVV), and 422 to 442 (FFQG…VMAT).

Belongs to the HAK/KUP transporter (TC 2.A.72) family.

It is found in the cell inner membrane. It carries out the reaction K(+)(in) + H(+)(in) = K(+)(out) + H(+)(out). In terms of biological role, transport of potassium into the cell. Likely operates as a K(+):H(+) symporter. This chain is Probable potassium transport system protein Kup 2, found in Albidiferax ferrireducens (strain ATCC BAA-621 / DSM 15236 / T118) (Rhodoferax ferrireducens).